The chain runs to 352 residues: MLRLLASGCARGPGPGVGARPAAGLFHPGRRQSRQASDAPRNQPPSPEFVARPVGVCSMMRLPVQTSPEGLDAAFIGVPLDTGTSNRPGARFGPRRIREESVMLGTVNPSTGALPFQSLMVADLGDVNVNLYNLQDSCRRIQEAYEKIVAAGCIPLTLGGDHTITYPILQAMAKKHGPVGLLHVDAHTDTTDKALGEKLYHGAPFRRCVDEGLLDCKRVVQIGIRGSSTTLDPYRYNRSQGFRVVLAEDCWMKSLVPLMGEVRQQMGGKPIYISFDIDALDPAYAPGTGTPEIAGLTPSQALEIIRGCQGLNVMGCDLVEVSPPYDLSGNTALLAANLLFEMLCALPKVTTV.

The transit peptide at 1 to 35 (MLRLLASGCARGPGPGVGARPAAGLFHPGRRQSRQ) directs the protein to the mitochondrion. A disordered region spans residues 11–49 (RGPGPGVGARPAAGLFHPGRRQSRQASDAPRNQPPSPEF). Mn(2+) contacts are provided by His-162, Asp-185, His-187, and Asp-189. Residue Lys-193 is modified to N6-acetyllysine. Residue Lys-217 is modified to N6-acetyllysine; alternate. Lys-217 is modified (N6-succinyllysine; alternate). Residues Asp-276 and Asp-278 each coordinate Mn(2+).

Belongs to the ureohydrolase superfamily. Arginase family. It depends on Mn(2+) as a cofactor. Highly expressed in liver and kidney. Also found in skeletal muscle, fetal liver, brain, testis, skin and the gastrointestinal tract. Within brain, expression is higher in the cerebral cortex with lower levels in the medulla and spinal cord.

It is found in the mitochondrion. The catalysed reaction is 3-guanidinopropanoate + H2O = urea + beta-alanine. It carries out the reaction 4-guanidinobutanoate + H2O = urea + 4-aminobutanoate. It catalyses the reaction taurocyamine + H2O = urea + taurine. The enzyme catalyses L-arginine + H2O = urea + L-ornithine. It participates in nitrogen metabolism; urea cycle; L-ornithine and urea from L-arginine: step 1/1. Functionally, hydrolyzes linear guanidino acids to form urea and the corresponding amines. Displays specificity for substrates having a negatively charged head group and short chains including taurocyamine, guanidino propanoic and butanoic acids. May protect cells by detoxifying potentially harmful amounts of guanidino acids. Metabolizes L-arginine with low efficiency. This Homo sapiens (Human) protein is Guanidino acid hydrolase, mitochondrial (AGMAT).